The following is a 436-amino-acid chain: Adenylosuccinate synthetase (436 aa).

Residues 12–18 (GDEGKGK) and 40–42 (GHT) each bind GTP. Residue Asp13 is the Proton acceptor of the active site. Mg(2+) contacts are provided by Asp13 and Gly40. IMP-binding positions include 13-16 (DEGK), 38-41 (NAGH), Thr128, Arg142, Gln223, Thr238, and Arg302. His41 functions as the Proton donor in the catalytic mechanism. A substrate-binding site is contributed by 298–304 (TTTGRRR). GTP is bound by residues Arg304, 330–332 (KLD), and 412–414 (SLG).

It belongs to the adenylosuccinate synthetase family. In terms of assembly, homodimer. The cofactor is Mg(2+).

Its subcellular location is the cytoplasm. It carries out the reaction IMP + L-aspartate + GTP = N(6)-(1,2-dicarboxyethyl)-AMP + GDP + phosphate + 2 H(+). It functions in the pathway purine metabolism; AMP biosynthesis via de novo pathway; AMP from IMP: step 1/2. Functionally, plays an important role in the de novo pathway of purine nucleotide biosynthesis. Catalyzes the first committed step in the biosynthesis of AMP from IMP. The protein is Adenylosuccinate synthetase of Prochlorococcus marinus (strain MIT 9215).